We begin with the raw amino-acid sequence, 129 residues long: D-ribose pyranase (129 aa).

The Proton donor role is filled by H20. Residues D28, H96, and 118-120 (YAN) each bind substrate.

This sequence belongs to the RbsD / FucU family. RbsD subfamily. As to quaternary structure, homodecamer.

It localises to the cytoplasm. The catalysed reaction is beta-D-ribopyranose = beta-D-ribofuranose. It functions in the pathway carbohydrate metabolism; D-ribose degradation; D-ribose 5-phosphate from beta-D-ribopyranose: step 1/2. Its function is as follows. Catalyzes the interconversion of beta-pyran and beta-furan forms of D-ribose. This chain is D-ribose pyranase, found in Staphylococcus haemolyticus (strain JCSC1435).